We begin with the raw amino-acid sequence, 326 residues long: Vitamin B12 import system permease protein BtuC (326 aa).

The next 9 membrane-spanning stretches (helical) occupy residues 15–35, 61–81, 88–108, 112–132, 146–166, 184–204, 240–260, 274–294, and 302–322; these read WLLC…CAGE, LAVL…QALF, PGLL…VLLG, LPNW…TLIL, LLAG…AIYF, GGVD…LLWI, GWMV…GLVI, VLLP…DVVA, and ELPI…WLLL.

The protein belongs to the binding-protein-dependent transport system permease family. FecCD subfamily. As to quaternary structure, the complex is composed of two ATP-binding proteins (BtuD), two transmembrane proteins (BtuC) and a solute-binding protein (BtuF).

Its subcellular location is the cell inner membrane. Functionally, part of the ABC transporter complex BtuCDF involved in vitamin B12 import. Involved in the translocation of the substrate across the membrane. The sequence is that of Vitamin B12 import system permease protein BtuC from Escherichia coli O8 (strain IAI1).